The chain runs to 314 residues: Melanoma-associated antigen 6 (314 aa).

A compositionally biased stretch (basic and acidic residues) spans 1-20 (MPLEQRSQHCKPEEGLEARG). Residues 1 to 99 (MPLEQRSQHC…QEEEGPSTFP (99 aa)) are disordered. Residues 21-44 (EALGLVGAQAPATEEQEAASSSST) are compositionally biased toward low complexity. The span at 65–87 (PQGASSLPTTMNYPLWSQSYEDS) shows a compositional bias: polar residues. Residues 109–308 (LSRKVAKLVH…ISYPLLHEWA (200 aa)) form the MAGE domain.

As to quaternary structure, interacts with TRIM28. Ubiquitinated by the DCX(DCAF12) complex specifically recognizes the diglutamate (Glu-Glu) at the C-terminus, leading to its degradation. As to expression, expressed in many tumors of several types, such as melanoma, head and neck squamous cell carcinoma, lung carcinoma and breast carcinoma, but not in normal tissues except for testes.

Activator of ubiquitin ligase activity of RING-type zinc finger-containing E3 ubiquitin-protein ligases that acts as a repressor of autophagy. May enhance ubiquitin ligase activity of TRIM28 and stimulate p53/TP53 ubiquitination by TRIM28. Proposed to act through recruitment and/or stabilization of the Ubl-conjugating enzyme (E2) at the E3:substrate complex. May play a role in tumor transformation or aspects of tumor progression. In vitro promotes cell viability in melanoma cell lines. This is Melanoma-associated antigen 6 from Homo sapiens (Human).